Here is a 591-residue protein sequence, read N- to C-terminus: Aspartate--tRNA(Asp/Asn) ligase (591 aa).

Glu-176 is an L-aspartate binding site. The segment at 200–203 is aspartate; sequence QLFK. Arg-222 provides a ligand contact to L-aspartate. ATP is bound by residues 222–224 and Gln-231; that span reads RDE. His-450 serves as a coordination point for L-aspartate. Glu-484 is a binding site for ATP. L-aspartate is bound at residue Arg-491. 536–539 lines the ATP pocket; sequence GLDR.

The protein belongs to the class-II aminoacyl-tRNA synthetase family. Type 1 subfamily. Homodimer.

Its subcellular location is the cytoplasm. The catalysed reaction is tRNA(Asx) + L-aspartate + ATP = L-aspartyl-tRNA(Asx) + AMP + diphosphate. Its function is as follows. Aspartyl-tRNA synthetase with relaxed tRNA specificity since it is able to aspartylate not only its cognate tRNA(Asp) but also tRNA(Asn). Reaction proceeds in two steps: L-aspartate is first activated by ATP to form Asp-AMP and then transferred to the acceptor end of tRNA(Asp/Asn). In Bacillus cereus (strain ATCC 10987 / NRS 248), this protein is Aspartate--tRNA(Asp/Asn) ligase.